Here is a 241-residue protein sequence, read N- to C-terminus: Small ribosomal subunit protein uS3 (241 aa).

Residues 39-107 enclose the KH type-2 domain; that stretch reads IREILHKELK…DVVINIVEIR (69 aa). Residues 217 to 241 form a disordered region; sequence KRMAEGETGGGGDRGGRQRRDNAAV. The span at 230-241 shows a compositional bias: basic and acidic residues; it reads RGGRQRRDNAAV.

This sequence belongs to the universal ribosomal protein uS3 family. Part of the 30S ribosomal subunit. Forms a tight complex with proteins S10 and S14.

Its function is as follows. Binds the lower part of the 30S subunit head. Binds mRNA in the 70S ribosome, positioning it for translation. The sequence is that of Small ribosomal subunit protein uS3 from Bradyrhizobium diazoefficiens (strain JCM 10833 / BCRC 13528 / IAM 13628 / NBRC 14792 / USDA 110).